The sequence spans 56 residues: Preprotein translocase subunit SecG (56 aa).

Residues 1–29 (MAKEKATLPPTGAGLMRFFDEDTKAVKIS) lie on the Cytoplasmic side of the membrane. Residues 30-51 (PRGVIALTLILVALEILLHAFG) traverse the membrane as a helical segment. The Extracellular segment spans residues 52–56 (PQIFG).

This sequence belongs to the SEC61-beta family. In terms of assembly, component of the protein translocase complex. Heterotrimer consisting of alpha (SecY), beta (SecG) and gamma (SecE) subunits. Can form oligomers of the heterotrimer.

It localises to the cell membrane. In terms of biological role, involved in protein export. The function of the beta subunit is unknown, but it may be involved in stabilization of the trimeric complex. This chain is Preprotein translocase subunit SecG, found in Thermococcus onnurineus (strain NA1).